The following is a 103-amino-acid chain: Pyrimidine/purine nucleoside phosphorylase (103 aa).

The protein belongs to the nucleoside phosphorylase PpnP family.

It catalyses the reaction a purine D-ribonucleoside + phosphate = a purine nucleobase + alpha-D-ribose 1-phosphate. The catalysed reaction is adenosine + phosphate = alpha-D-ribose 1-phosphate + adenine. The enzyme catalyses cytidine + phosphate = cytosine + alpha-D-ribose 1-phosphate. It carries out the reaction guanosine + phosphate = alpha-D-ribose 1-phosphate + guanine. It catalyses the reaction inosine + phosphate = alpha-D-ribose 1-phosphate + hypoxanthine. The catalysed reaction is thymidine + phosphate = 2-deoxy-alpha-D-ribose 1-phosphate + thymine. The enzyme catalyses uridine + phosphate = alpha-D-ribose 1-phosphate + uracil. It carries out the reaction xanthosine + phosphate = alpha-D-ribose 1-phosphate + xanthine. In terms of biological role, catalyzes the phosphorolysis of diverse nucleosides, yielding D-ribose 1-phosphate and the respective free bases. Can use uridine, adenosine, guanosine, cytidine, thymidine, inosine and xanthosine as substrates. Also catalyzes the reverse reactions. In Shewanella denitrificans (strain OS217 / ATCC BAA-1090 / DSM 15013), this protein is Pyrimidine/purine nucleoside phosphorylase.